The primary structure comprises 20 residues: Phenol-soluble modulin alpha 4 peptide (20 aa).

Belongs to the phenol-soluble modulin alpha peptides family.

Functionally, peptide which can recruit, activate and subsequently lyse neutrophils, thus eliminating the main cellular defense against infection. The chain is Phenol-soluble modulin alpha 4 peptide (psmA4) from Staphylococcus aureus (strain bovine RF122 / ET3-1).